Here is a 100-residue protein sequence, read N- to C-terminus: Small ribosomal subunit protein uS14c (100 aa).

This sequence belongs to the universal ribosomal protein uS14 family. In terms of assembly, part of the 30S ribosomal subunit.

Its subcellular location is the plastid. The protein localises to the chloroplast. Functionally, binds 16S rRNA, required for the assembly of 30S particles. The polypeptide is Small ribosomal subunit protein uS14c (Cycas taitungensis (Prince sago)).